Consider the following 492-residue polypeptide: Histone-lysine N-methyltransferase PRDM7 (492 aa).

The interval 1-22 (MSPERSQEESPEGDTERTERKP) is disordered. One can recognise a KRAB-related domain in the interval 23–86 (MVKDAFKDIS…RRQAIKLQVD (64 aa)). A disordered region spans residues 111–179 (EQSKHQKGMP…ELRRKETEGK (69 aa)). Positions 135–150 (GTPNLLNTSDSEQAQK) are enriched in polar residues. The segment covering 167-179 (LKLELRRKETEGK) has biased composition (basic and acidic residues). In terms of domain architecture, SET spans 244–358 (PGLRIGPSGI…PGCELLVWSG (115 aa)).

Its subcellular location is the nucleus. The protein localises to the chromosome. The enzyme catalyses N(6),N(6)-dimethyl-L-lysyl(4)-[histone H3] + S-adenosyl-L-methionine = N(6),N(6),N(6)-trimethyl-L-lysyl(4)-[histone H3] + S-adenosyl-L-homocysteine + H(+). Its function is as follows. Histone methyltransferase that selectively methylates 'Lys-4' of dimethylated histone H3 (H3K4me2) to produce trimethylated 'Lys-4' histone H3 (H3K4me3). May play a role in epigenetic regulation of gene expression by defining an active chromatin state. This chain is Histone-lysine N-methyltransferase PRDM7, found in Homo sapiens (Human).